The primary structure comprises 132 residues: Small ribosomal subunit protein uS8 (132 aa).

This sequence belongs to the universal ribosomal protein uS8 family. In terms of assembly, part of the 30S ribosomal subunit. Contacts proteins S5 and S12.

One of the primary rRNA binding proteins, it binds directly to 16S rRNA central domain where it helps coordinate assembly of the platform of the 30S subunit. This Clostridium perfringens (strain ATCC 13124 / DSM 756 / JCM 1290 / NCIMB 6125 / NCTC 8237 / Type A) protein is Small ribosomal subunit protein uS8.